The following is a 278-amino-acid chain: Protein saf1 (278 aa).

Disordered regions lie at residues 1–43 (MLSK…RNMS), 81–210 (KKNI…DIEE), and 240–264 (QKLA…EDKD). Composition is skewed to basic and acidic residues over residues 22–38 (QIKV…ERLS) and 90–103 (GRVE…AERQ). Composition is skewed to basic residues over residues 104–116 (HKPR…KNPK) and 169–183 (REKK…HHKK). A compositionally biased stretch (polar residues) spans 186 to 202 (INASSAQPKSTTTTEAA).

Its subcellular location is the nucleus. It is found in the nucleolus. The chain is Protein saf1 (saf1) from Schizosaccharomyces pombe (strain 972 / ATCC 24843) (Fission yeast).